Consider the following 254-residue polypeptide: UPF0246 protein lpp1320 (254 aa).

It belongs to the UPF0246 family.

This is UPF0246 protein lpp1320 from Legionella pneumophila (strain Paris).